The chain runs to 208 residues: Claudin-like protein ZF-A89 (208 aa).

4 helical membrane passes run 8-28 (LLAT…CALP), 82-102 (ALVV…IAGG), 117-137 (VVVA…IPVC), and 160-180 (LGAS…GGAL).

The protein belongs to the claudin family.

The protein localises to the cell membrane. Its subcellular location is the cell junction. It localises to the tight junction. Its function is as follows. Component of tight junction (TJ) strands. In Danio rerio (Zebrafish), this protein is Claudin-like protein ZF-A89 (cldnd).